Consider the following 405-residue polypeptide: Probable tRNA sulfurtransferase (405 aa).

The THUMP domain maps to 60-165 (ETIDQRLKLV…QDAIYISNQL (106 aa)). ATP is bound by residues 183–184 (ML), 208–209 (HF), arginine 265, glycine 287, and glutamine 296.

This sequence belongs to the ThiI family.

It localises to the cytoplasm. The enzyme catalyses [ThiI sulfur-carrier protein]-S-sulfanyl-L-cysteine + a uridine in tRNA + 2 reduced [2Fe-2S]-[ferredoxin] + ATP + H(+) = [ThiI sulfur-carrier protein]-L-cysteine + a 4-thiouridine in tRNA + 2 oxidized [2Fe-2S]-[ferredoxin] + AMP + diphosphate. It carries out the reaction [ThiS sulfur-carrier protein]-C-terminal Gly-Gly-AMP + S-sulfanyl-L-cysteinyl-[cysteine desulfurase] + AH2 = [ThiS sulfur-carrier protein]-C-terminal-Gly-aminoethanethioate + L-cysteinyl-[cysteine desulfurase] + A + AMP + 2 H(+). The protein operates within cofactor biosynthesis; thiamine diphosphate biosynthesis. Functionally, catalyzes the ATP-dependent transfer of a sulfur to tRNA to produce 4-thiouridine in position 8 of tRNAs, which functions as a near-UV photosensor. Also catalyzes the transfer of sulfur to the sulfur carrier protein ThiS, forming ThiS-thiocarboxylate. This is a step in the synthesis of thiazole, in the thiamine biosynthesis pathway. The sulfur is donated as persulfide by IscS. This Lactobacillus johnsonii (strain CNCM I-12250 / La1 / NCC 533) protein is Probable tRNA sulfurtransferase.